A 144-amino-acid chain; its full sequence is 3-hydroxyacyl-[acyl-carrier-protein] dehydratase FabZ (144 aa).

His51 is an active-site residue.

The protein belongs to the thioester dehydratase family. FabZ subfamily.

The protein localises to the cytoplasm. It carries out the reaction a (3R)-hydroxyacyl-[ACP] = a (2E)-enoyl-[ACP] + H2O. Functionally, involved in unsaturated fatty acids biosynthesis. Catalyzes the dehydration of short chain beta-hydroxyacyl-ACPs and long chain saturated and unsaturated beta-hydroxyacyl-ACPs. This Clostridium botulinum (strain Okra / Type B1) protein is 3-hydroxyacyl-[acyl-carrier-protein] dehydratase FabZ.